The primary structure comprises 303 residues: Light-independent protochlorophyllide reductase iron-sulfur ATP-binding protein (303 aa).

Positions 1-24 are disordered; it reads MSSVLERPAAPAILPSRQDGEGSV. ATP contacts are provided by residues 47-52 and Lys-76; that span reads GIGKST. Ser-51 is a binding site for Mg(2+). The [4Fe-4S] cluster site is built by Cys-132 and Cys-166. Residues 217-218 and 241-243 each bind ATP; these read NR and PDL.

The protein belongs to the NifH/BchL/ChlL family. Homodimer. Protochlorophyllide reductase is composed of three subunits; BchL, BchN and BchB. [4Fe-4S] cluster is required as a cofactor.

It catalyses the reaction chlorophyllide a + oxidized 2[4Fe-4S]-[ferredoxin] + 2 ADP + 2 phosphate = protochlorophyllide a + reduced 2[4Fe-4S]-[ferredoxin] + 2 ATP + 2 H2O. The protein operates within porphyrin-containing compound metabolism; bacteriochlorophyll biosynthesis (light-independent). Component of the dark-operative protochlorophyllide reductase (DPOR) that uses Mg-ATP and reduced ferredoxin to reduce ring D of protochlorophyllide (Pchlide) to form chlorophyllide a (Chlide). This reaction is light-independent. The L component serves as a unique electron donor to the NB-component of the complex, and binds Mg-ATP. The protein is Light-independent protochlorophyllide reductase iron-sulfur ATP-binding protein of Rhodospirillum centenum (strain ATCC 51521 / SW).